A 203-amino-acid chain; its full sequence is Peptide deformylase (203 aa).

Fe cation is bound by residues Cys121 and His163. Glu164 is a catalytic residue. Fe cation is bound at residue His167.

Belongs to the polypeptide deformylase family. It depends on Fe(2+) as a cofactor.

The enzyme catalyses N-terminal N-formyl-L-methionyl-[peptide] + H2O = N-terminal L-methionyl-[peptide] + formate. In terms of biological role, removes the formyl group from the N-terminal Met of newly synthesized proteins. Requires at least a dipeptide for an efficient rate of reaction. N-terminal L-methionine is a prerequisite for activity but the enzyme has broad specificity at other positions. The protein is Peptide deformylase of Prochlorococcus marinus (strain SARG / CCMP1375 / SS120).